The following is an 889-amino-acid chain: Alanine--tRNA ligase (889 aa).

H564, H568, C677, and H681 together coordinate Zn(2+).

The protein belongs to the class-II aminoacyl-tRNA synthetase family. Requires Zn(2+) as cofactor.

The protein localises to the cytoplasm. It catalyses the reaction tRNA(Ala) + L-alanine + ATP = L-alanyl-tRNA(Ala) + AMP + diphosphate. Functionally, catalyzes the attachment of alanine to tRNA(Ala) in a two-step reaction: alanine is first activated by ATP to form Ala-AMP and then transferred to the acceptor end of tRNA(Ala). Also edits incorrectly charged Ser-tRNA(Ala) and Gly-tRNA(Ala) via its editing domain. This is Alanine--tRNA ligase from Rhodopseudomonas palustris (strain ATCC BAA-98 / CGA009).